The sequence spans 507 residues: Glutamate--tRNA ligase (507 aa).

The short motif at 14–24 is the 'HIGH' region element; sequence PSPTGYLHIGG. The 'KMSKS' region motif lies at 261 to 265; sequence KLSKR. Position 264 (K264) interacts with ATP.

Belongs to the class-I aminoacyl-tRNA synthetase family. Glutamate--tRNA ligase type 1 subfamily. As to quaternary structure, monomer.

The protein resides in the cytoplasm. The enzyme catalyses tRNA(Glu) + L-glutamate + ATP = L-glutamyl-tRNA(Glu) + AMP + diphosphate. Functionally, catalyzes the attachment of glutamate to tRNA(Glu) in a two-step reaction: glutamate is first activated by ATP to form Glu-AMP and then transferred to the acceptor end of tRNA(Glu). The protein is Glutamate--tRNA ligase of Roseiflexus castenholzii (strain DSM 13941 / HLO8).